A 416-amino-acid polypeptide reads, in one-letter code: MNQESISQSIAIVHPITLSHGRNAEVWDTDGKRYIDFVGGIGVLNLGHCNPAVVEAIQAQATRLTHYAFNAAPHGPYLALMEQLSQFVPVSYPLAGMLTNSGAEAAENALKVARGATGKRAIIAFDGGFHGRTLATLNLNGKVAPYKQRVGELPGPVYHLPYPSADTGVTCEQALKAMDRLFSVELAVEDVAAFIFEPVQGEGGFLALDPAFAQALRRFCDERGILIIIDEIQSGFGRTGQRFAFPRLGIEPDLLLLAKSIAGGMPLGAVVGRKELMAALPKGGLGGTYSGNPISCAAALASLAQMTDENLATWGERQEQAIVSRYERWKASGLSPYIGRLTGVGAMRGIEFANADGSPAPAQLAKVMEAARARGLLLMPSGKARHIIRLLAPLTIEAEVLEEGLDILEQCLAELN.

Residues 102 to 103 (GA) and Q233 each bind pyridoxal 5'-phosphate. Position 259 is an N6-(pyridoxal phosphate)lysine (K259). T288 contributes to the pyridoxal 5'-phosphate binding site.

Belongs to the class-III pyridoxal-phosphate-dependent aminotransferase family. Pyridoxal 5'-phosphate serves as cofactor.

The enzyme catalyses L-2-aminoadipate + 2-oxoglutarate = 2-oxoadipate + L-glutamate. It catalyses the reaction 5-aminopentanoate + 2-oxoglutarate = 5-oxopentanoate + L-glutamate. The protein operates within amino-acid degradation. Functionally, catalyzes the conversion of 2-aminoadipate (2AA) to 2-oxoadipate (2OA). Is most active on L-2-aminoadipate (L-2AA) and shows only weak activity on the enantiomer, D-2-aminoadipate (D-2AA). Shows moderate activity on 5-aminovalerate (5AVA) and weak activity toward 4-aminobutyrate (GABA). Is involved in a D-lysine catabolic pathway. The sequence is that of 2-aminoadipate transaminase from Pseudomonas putida (strain ATCC 47054 / DSM 6125 / CFBP 8728 / NCIMB 11950 / KT2440).